A 498-amino-acid chain; its full sequence is Putative antiporter subunit mnhD2 (498 aa).

14 helical membrane passes run Leu-2–Phe-22, Tyr-32–Val-52, Leu-78–Phe-98, Tyr-108–Ser-128, Leu-130–Leu-150, Ile-161–Leu-181, Ile-209–Leu-229, Leu-240–Phe-260, Ile-271–Ile-291, Ile-308–Phe-328, Leu-330–Ile-350, Phe-369–Phe-389, Ile-406–Phe-426, and Ile-451–Asn-471.

This sequence belongs to the CPA3 antiporters (TC 2.A.63) subunit D family. As to quaternary structure, may form a heterooligomeric complex that consists of seven subunits: mnhA2, mnhB2, mnhC2, mnhD2, mnhE2, mnhF2 and mnhG2.

It is found in the cell membrane. The protein is Putative antiporter subunit mnhD2 (mnhD2) of Staphylococcus aureus (strain Mu3 / ATCC 700698).